The chain runs to 151 residues: UPF0208 membrane protein YfbV (151 aa).

2 helical membrane passes run 46–65 (YAIRFMPPIAVFTLCWQIAL) and 69–91 (LGPAVATALFALSLPMQGLWWLG).

Belongs to the UPF0208 family.

The protein localises to the cell inner membrane. This chain is UPF0208 membrane protein YfbV, found in Shigella boydii serotype 18 (strain CDC 3083-94 / BS512).